Here is a 1182-residue protein sequence, read N- to C-terminus: Retrotransposable element SLACS 132 kDa protein (1182 aa).

Disordered stretches follow at residues 77–97 (GERS…PRER), 163–220 (DVLD…STDQ), 317–339 (RRKR…ALRL), and 418–478 (RTAR…STAP). The segment covering 163 to 174 (DVLDEEEQDDDL) has biased composition (acidic residues). Residues 420 to 446 (ARREQQQQRGKDNQEEEDRQKKEEKSL) show a composition bias toward basic and acidic residues. The span at 456-475 (SVRQGGQPSSSQPKRLNRWS) shows a compositional bias: polar residues. A Reverse transcriptase domain is found at 560-790 (NADVSMEVGR…TGDTGFGTAV (231 aa)).

It catalyses the reaction DNA(n) + a 2'-deoxyribonucleoside 5'-triphosphate = DNA(n+1) + diphosphate. The polypeptide is Retrotransposable element SLACS 132 kDa protein (Trypanosoma brucei gambiense).